A 426-amino-acid polypeptide reads, in one-letter code: Glutamyl-tRNA reductase (426 aa).

Substrate contacts are provided by residues 49-52 (TCNR), S109, 114-116 (EGQ), and Q120. Catalysis depends on C50, which acts as the Nucleophile. 189–194 (GAGETG) lines the NADP(+) pocket.

The protein belongs to the glutamyl-tRNA reductase family. In terms of assembly, homodimer.

It carries out the reaction (S)-4-amino-5-oxopentanoate + tRNA(Glu) + NADP(+) = L-glutamyl-tRNA(Glu) + NADPH + H(+). It participates in porphyrin-containing compound metabolism; protoporphyrin-IX biosynthesis; 5-aminolevulinate from L-glutamyl-tRNA(Glu): step 1/2. Catalyzes the NADPH-dependent reduction of glutamyl-tRNA(Glu) to glutamate 1-semialdehyde (GSA). This chain is Glutamyl-tRNA reductase (hemA), found in Chlorobaculum parvum (strain DSM 263 / NCIMB 8327) (Chlorobium vibrioforme subsp. thiosulfatophilum).